The sequence spans 185 residues: Elongation factor P (185 aa).

This sequence belongs to the elongation factor P family.

The protein localises to the cytoplasm. It participates in protein biosynthesis; polypeptide chain elongation. Functionally, involved in peptide bond synthesis. Stimulates efficient translation and peptide-bond synthesis on native or reconstituted 70S ribosomes in vitro. Probably functions indirectly by altering the affinity of the ribosome for aminoacyl-tRNA, thus increasing their reactivity as acceptors for peptidyl transferase. The sequence is that of Elongation factor P (efp) from Synechococcus elongatus (strain ATCC 33912 / PCC 7942 / FACHB-805) (Anacystis nidulans R2).